The sequence spans 237 residues: MIVIPAIDLIDGKCVRLTQGDYSQVQLFNSDPIEQAKLFEKSGAKYVHVVDLDGAKVGRPVNFEVIRNIKRVTSLTVECGGGIRDKATVELYISSGVNYIILGSVIFKNPDFVNEVMKVFGKERFIASLDFKDGFVKLSGWQEATTITIEEGIMKIKTLGFERLIYTDITTDGMLKGHNFEAAKYIRELFDGFLTASGGISTKEDIMRLKSIGVDAAVVGKALYTGQLKLEEVINLL.

The active-site Proton acceptor is the aspartate 8. The active-site Proton donor is aspartate 130.

It belongs to the HisA/HisF family.

It localises to the cytoplasm. It catalyses the reaction 1-(5-phospho-beta-D-ribosyl)-5-[(5-phospho-beta-D-ribosylamino)methylideneamino]imidazole-4-carboxamide = 5-[(5-phospho-1-deoxy-D-ribulos-1-ylimino)methylamino]-1-(5-phospho-beta-D-ribosyl)imidazole-4-carboxamide. The protein operates within amino-acid biosynthesis; L-histidine biosynthesis; L-histidine from 5-phospho-alpha-D-ribose 1-diphosphate: step 4/9. The sequence is that of 1-(5-phosphoribosyl)-5-[(5-phosphoribosylamino)methylideneamino] imidazole-4-carboxamide isomerase from Caldicellulosiruptor bescii (strain ATCC BAA-1888 / DSM 6725 / KCTC 15123 / Z-1320) (Anaerocellum thermophilum).